The sequence spans 164 residues: Endoribonuclease YbeY (164 aa).

The Zn(2+) site is built by histidine 114, histidine 118, and histidine 124.

Belongs to the endoribonuclease YbeY family. Zn(2+) is required as a cofactor.

Its subcellular location is the cytoplasm. Its function is as follows. Single strand-specific metallo-endoribonuclease involved in late-stage 70S ribosome quality control and in maturation of the 3' terminus of the 16S rRNA. This is Endoribonuclease YbeY from Mycoplasmoides gallisepticum (strain R(low / passage 15 / clone 2)) (Mycoplasma gallisepticum).